Here is a 101-residue protein sequence, read N- to C-terminus: Protein Tat (101 aa).

Residues 1-20 (MDPVDPNIEPWNQPGSQPKT) form a disordered region. The interval 1–24 (MDPVDPNIEPWNQPGSQPKTACNQ) is interaction with human CREBBP. The transactivation stretch occupies residues 1-48 (MDPVDPNIEPWNQPGSQPKTACNQCYCKRCCYHCQICFLKKGLGISNG). Zn(2+)-binding residues include cysteine 22, cysteine 25, and cysteine 27. The segment at 22-37 (CNQCYCKRCCYHCQIC) is cysteine-rich. Lysine 28 is modified (N6-acetyllysine; by host PCAF). Residues cysteine 30, histidine 33, cysteine 34, and cysteine 37 each contribute to the Zn(2+) site. The segment at 38-48 (FLKKGLGISNG) is core. The disordered stretch occupies residues 45 to 101 (ISNGRKKRRPRRTTPYNSENHQDPLRKQPLSQPRGEQTDPKESKKKVESKTKTDQFD). Positions 49–57 (RKKRRPRRT) match the Nuclear localization signal, RNA-binding (TAR), and protein transduction motif. Residues 49–86 (RKKRRPRRTTPYNSENHQDPLRKQPLSQPRGEQTDPKE) form an interaction with the host capping enzyme RNGTT region. An N6-acetyllysine; by host EP300 and GCN5L2 mark is found at lysine 50 and lysine 51. Asymmetric dimethylarginine; by host PRMT6 is present on residues arginine 52 and arginine 53. Lysine 71 is covalently cross-linked (Glycyl lysine isopeptide (Lys-Gly) (interchain with G-Cter in ubiquitin)). Residues 80–101 (EQTDPKESKKKVESKTKTDQFD) show a composition bias toward basic and acidic residues.

It belongs to the lentiviruses Tat family. In terms of assembly, interacts with host CCNT1. Associates with the P-TEFb complex composed at least of Tat, P-TEFb (CDK9 and CCNT1), TAR RNA, RNA Pol II. Recruits the HATs CREBBP, TAF1/TFIID, EP300, PCAF and GCN5L2. Interacts with host KAT5/Tip60; this interaction targets the latter to degradation. Interacts with the host deacetylase SIRT1. Interacts with host capping enzyme RNGTT; this interaction stimulates RNGTT. Binds to host KDR, and to the host integrins ITGAV/ITGB3 and ITGA5/ITGB1. Interacts with host KPNB1/importin beta-1 without previous binding to KPNA1/importin alpha-1. Interacts with EIF2AK2. Interacts with host nucleosome assembly protein NAP1L1; this interaction may be required for the transport of Tat within the nucleus, since the two proteins interact at the nuclear rim. Interacts with host C1QBP/SF2P32; this interaction involves lysine-acetylated Tat. Interacts with the host chemokine receptors CCR2, CCR3 and CXCR4. Interacts with host DPP4/CD26; this interaction may trigger an anti-proliferative effect. Interacts with host LDLR. Interacts with the host extracellular matrix metalloproteinase MMP1. Interacts with host PRMT6; this interaction mediates Tat's methylation. Interacts with, and is ubiquitinated by MDM2/Hdm2. Interacts with host PSMC3 and HTATIP2. Interacts with STAB1; this interaction may overcome SATB1-mediated repression of IL2 and IL2RA (interleukin) in T cells by binding to the same domain than HDAC1. Interacts (when acetylated) with human CDK13, thereby increasing HIV-1 mRNA splicing and promoting the production of the doubly spliced HIV-1 protein Nef. Interacts with host TBP; this interaction modulates the activity of transcriptional pre-initiation complex. Interacts with host RELA. Interacts with host PLSCR1; this interaction negatively regulates Tat transactivation activity by altering its subcellular distribution. Asymmetrical arginine methylation by host PRMT6 seems to diminish the transactivation capacity of Tat and affects the interaction with host CCNT1. Post-translationally, acetylation by EP300, CREBBP, GCN5L2/GCN5 and PCAF regulates the transactivation activity of Tat. EP300-mediated acetylation of Lys-50 promotes dissociation of Tat from the TAR RNA through the competitive binding to PCAF's bromodomain. In addition, the non-acetylated Tat's N-terminus can also interact with PCAF. PCAF-mediated acetylation of Lys-28 enhances Tat's binding to CCNT1. Lys-50 is deacetylated by SIRT1. In terms of processing, polyubiquitination by host MDM2 does not target Tat to degradation, but activates its transactivation function and fosters interaction with CCNT1 and TAR RNA. Phosphorylated by EIF2AK2 on serine and threonine residues adjacent to the basic region important for TAR RNA binding and function. Phosphorylation of Tat by EIF2AK2 is dependent on the prior activation of EIF2AK2 by dsRNA.

Its subcellular location is the host nucleus. The protein resides in the host nucleolus. The protein localises to the host cytoplasm. It localises to the secreted. Its function is as follows. Transcriptional activator that increases RNA Pol II processivity, thereby increasing the level of full-length viral transcripts. Recognizes a hairpin structure at the 5'-LTR of the nascent viral mRNAs referred to as the transactivation responsive RNA element (TAR) and recruits the cyclin T1-CDK9 complex (P-TEFb complex) that will in turn hyperphosphorylate the RNA polymerase II to allow efficient elongation. The CDK9 component of P-TEFb and other Tat-activated kinases hyperphosphorylate the C-terminus of RNA Pol II that becomes stabilized and much more processive. Other factors such as HTATSF1/Tat-SF1, SUPT5H/SPT5, and HTATIP2 are also important for Tat's function. Besides its effect on RNA Pol II processivity, Tat induces chromatin remodeling of proviral genes by recruiting the histone acetyltransferases (HATs) CREBBP, EP300 and PCAF to the chromatin. This also contributes to the increase in proviral transcription rate, especially when the provirus integrates in transcriptionally silent region of the host genome. To ensure maximal activation of the LTR, Tat mediates nuclear translocation of NF-kappa-B by interacting with host RELA. Through its interaction with host TBP, Tat may also modulate transcription initiation. Tat can reactivate a latently infected cell by penetrating in it and transactivating its LTR promoter. In the cytoplasm, Tat is thought to act as a translational activator of HIV-1 mRNAs. Functionally, extracellular circulating Tat can be endocytosed by surrounding uninfected cells via the binding to several surface receptors such as CD26, CXCR4, heparan sulfate proteoglycans (HSPG) or LDLR. Neurons are rarely infected, but they internalize Tat via their LDLR. Through its interaction with nuclear HATs, Tat is potentially able to control the acetylation-dependent cellular gene expression. Modulates the expression of many cellular genes involved in cell survival, proliferation or in coding for cytokines or cytokine receptors. Tat plays a role in T-cell and neurons apoptosis. Tat induced neurotoxicity and apoptosis probably contribute to neuroAIDS. Circulating Tat also acts as a chemokine-like and/or growth factor-like molecule that binds to specific receptors on the surface of the cells, affecting many cellular pathways. In the vascular system, Tat binds to ITGAV/ITGB3 and ITGA5/ITGB1 integrins dimers at the surface of endothelial cells and competes with bFGF for heparin-binding sites, leading to an excess of soluble bFGF. In Homo sapiens (Human), this protein is Protein Tat.